The following is a 296-amino-acid chain: Cytidine deaminase (296 aa).

CMP/dCMP-type deaminase domains are found at residues 47 to 167 and 186 to 296; these read TESE…FGPK and DSSD…VDPI. Position 88 to 90 (88 to 90) interacts with substrate; that stretch reads NLE. A Zn(2+)-binding site is contributed by His-101. Residue Glu-103 is the Proton donor of the active site. 2 residues coordinate Zn(2+): Cys-128 and Cys-131.

The protein belongs to the cytidine and deoxycytidylate deaminase family. In terms of assembly, homodimer. The cofactor is Zn(2+).

It catalyses the reaction cytidine + H2O + H(+) = uridine + NH4(+). The enzyme catalyses 2'-deoxycytidine + H2O + H(+) = 2'-deoxyuridine + NH4(+). In terms of biological role, this enzyme scavenges exogenous and endogenous cytidine and 2'-deoxycytidine for UMP synthesis. The chain is Cytidine deaminase from Shewanella oneidensis (strain ATCC 700550 / JCM 31522 / CIP 106686 / LMG 19005 / NCIMB 14063 / MR-1).